We begin with the raw amino-acid sequence, 166 residues long: Ribosome maturation factor RimM (166 aa).

In terms of domain architecture, PRC barrel spans 91–163 (DDGFYDHELE…TCVITPPEGL (73 aa)).

Belongs to the RimM family. Binds ribosomal protein uS19.

It is found in the cytoplasm. An accessory protein needed during the final step in the assembly of 30S ribosomal subunit, possibly for assembly of the head region. Essential for efficient processing of 16S rRNA. May be needed both before and after RbfA during the maturation of 16S rRNA. It has affinity for free ribosomal 30S subunits but not for 70S ribosomes. The sequence is that of Ribosome maturation factor RimM from Corynebacterium diphtheriae (strain ATCC 700971 / NCTC 13129 / Biotype gravis).